The following is a 1003-amino-acid chain: Retinoblastoma-related protein 1 (1003 aa).

The domain A stretch occupies residues 405–607; that stretch reads TPVSTAMTTA…EKGSSMYNSL (203 aa). The interval 405-860 is pocket; the sequence is TPVSTAMTTA…NEMFIPSVKP (456 aa). The segment at 608-729 is spacer; the sequence is AVAKPSLAAE…PGGGGETCAE (122 aa). The tract at residues 730-860 is domain B; sequence TAINVFFGKI…NEMFIPSVKP (131 aa). Residues 868-899 form a disordered region; the sequence is AGNNSEKNDHNDGQGPASPKPSPFPKLPDMSP.

The protein belongs to the retinoblastoma protein (RB) family. Expressed in roots, stems, leaves and flowers.

It localises to the nucleus. Regulator of biological processes that recruits a histone deacetylase to control gene transcription. Formation of stable complexes with geminiviridae replication-associated proteins may create a cellular environment which favors viral DNA replication. May play a role in the entry into mitosis, negatively regulating the cell proliferation during leaf, stem, and flower development. Critical regulator of the endocycle. The protein is Retinoblastoma-related protein 1 (RBR1) of Nicotiana benthamiana.